The chain runs to 500 residues: L-arabinose isomerase (500 aa).

Mn(2+)-binding residues include Glu306, Glu333, His350, and His450.

The protein belongs to the arabinose isomerase family. Homohexamer. Mn(2+) serves as cofactor.

It catalyses the reaction beta-L-arabinopyranose = L-ribulose. The protein operates within carbohydrate degradation; L-arabinose degradation via L-ribulose; D-xylulose 5-phosphate from L-arabinose (bacterial route): step 1/3. In terms of biological role, catalyzes the conversion of L-arabinose to L-ribulose. This Yersinia pestis bv. Antiqua (strain Nepal516) protein is L-arabinose isomerase.